A 600-amino-acid polypeptide reads, in one-letter code: Elongation factor 4 (600 aa).

A tr-type G domain is found at 5-187 (KYIRNFSIIA…AIVNKLPPPK (183 aa)). GTP is bound by residues 17 to 22 (DHGKST) and 134 to 137 (NKLD).

This sequence belongs to the TRAFAC class translation factor GTPase superfamily. Classic translation factor GTPase family. LepA subfamily.

It localises to the cell inner membrane. It carries out the reaction GTP + H2O = GDP + phosphate + H(+). Its function is as follows. Required for accurate and efficient protein synthesis under certain stress conditions. May act as a fidelity factor of the translation reaction, by catalyzing a one-codon backward translocation of tRNAs on improperly translocated ribosomes. Back-translocation proceeds from a post-translocation (POST) complex to a pre-translocation (PRE) complex, thus giving elongation factor G a second chance to translocate the tRNAs correctly. Binds to ribosomes in a GTP-dependent manner. The sequence is that of Elongation factor 4 from Rickettsia africae (strain ESF-5).